Here is a 306-residue protein sequence, read N- to C-terminus: UDP-N-acetylenolpyruvoylglucosamine reductase (306 aa).

Positions 25 to 188 constitute an FAD-binding PCMH-type domain; that stretch reads RVGGPADWLF…IEARFRAEPG (164 aa). Arg-168 is a catalytic residue. Basic and acidic residues predominate over residues 199 to 214; it reads EQLARRDASQPTKDRS. The interval 199 to 232 is disordered; it reads EQLARRDASQPTKDRSAGSTFRNPAGYSSTGRAD. Positions 215-229 are enriched in polar residues; that stretch reads AGSTFRNPAGYSSTG. The active-site Proton donor is the Ser-217. Glu-299 is a catalytic residue.

It belongs to the MurB family. FAD is required as a cofactor.

The protein localises to the cytoplasm. It catalyses the reaction UDP-N-acetyl-alpha-D-muramate + NADP(+) = UDP-N-acetyl-3-O-(1-carboxyvinyl)-alpha-D-glucosamine + NADPH + H(+). The protein operates within cell wall biogenesis; peptidoglycan biosynthesis. Functionally, cell wall formation. This is UDP-N-acetylenolpyruvoylglucosamine reductase from Paracoccus denitrificans (strain Pd 1222).